Reading from the N-terminus, the 188-residue chain is MRLPLPLLLLFGCRAILGSAGDRVSLSASAPTLDDEEKYSAHMPAHLRCDACRAVAFQMGQRLAKAEAKSHTPDASGLQELSESTYTDVLDQTCSQNWQSYGVHEVNQMKRLTGPGLSKGPEPRISVMISGGPWPNRLSKTCFHYLGEFGEDQIYEAYRQGQANLEALLCGGTHGPCSQEILAQREEL.

The first 20 residues, 1–20 (MRLPLPLLLLFGCRAILGSA), serve as a signal peptide directing secretion. Intrachain disulfides connect C49/C177, C52/C170, and C94/C142. The Prevents secretion from ER motif lies at 185–188 (REEL).

The protein belongs to the MZB1 family. As to quaternary structure, part of the ER chaperone complex, a multi-protein complex in the endoplasmic reticulum containing a large number of molecular chaperones which associates with unassembled incompletely folded immunoglobulin heavy chains. Interacts with HSP90B1 and PDIA3 in a calcium-dependent manner. Forms an interchain disulfide bond with IgM monomers. In terms of tissue distribution, expressed predominantly in the spleen and lymph nodes. Abundantly expressed in marginal zone B and B1 cells. High expression in mesenteric adipose tissue (MAT). Expressed also in pancreas, perigonadal adipose tissue (PAT), uterus, subcutaneous adipose tissue, heart, muscle, ovary and liver. Very low expression is detected in brown adipose tissue. In PAT, significantly higher expression in stromal-vascular cell than in adipocytes. Expressed in macrophage RAW 264.7 cell line. Down-regulated in For-knockout female MAT at 5 months (obese state) followed by steep up-regulation at 9 months (prediabetic condition) when mutants progress towards the metabolic syndrome.

The protein resides in the endoplasmic reticulum. The protein localises to the endoplasmic reticulum lumen. It is found in the secreted. Its function is as follows. Associates with immunoglobulin M (IgM) heavy and light chains and promotes IgM assembly and secretion. May exert its effect by acting as a molecular chaperone or as an oxidoreductase as it displays a low level of oxidoreductase activity. Helps to diversify peripheral B-cell functions by regulating Ca(2+) stores, antibody secretion and integrin activation. Functionally, acts as a hormone-regulated adipokine/pro-inflammatory cytokine that is implicated in causing chronic inflammation, affecting cellular expansion and blunting insulin response in adipocytes. May have a role in the onset of insulin resistance. The polypeptide is Marginal zone B- and B1-cell-specific protein (Mzb1) (Mus musculus (Mouse)).